The following is a 109-amino-acid chain: uncharacterized protein (109 aa).

A helical transmembrane segment spans residues leucine 75 to tyrosine 95.

It localises to the membrane. This is an uncharacterized protein from Schizosaccharomyces pombe (strain 972 / ATCC 24843) (Fission yeast).